We begin with the raw amino-acid sequence, 281 residues long: Probable thioesterase gloN (281 aa).

A disordered region spans residues 207-233 (LDDGSNNSRDLNETSPTETSNDSETQA). The segment covering 210–232 (GSNNSRDLNETSPTETSNDSETQ) has biased composition (polar residues).

The protein belongs to the AMT4 thioesterase family.

The protein operates within mycotoxin biosynthesis. Its function is as follows. Probable thioesterase; part of the gene cluster that mediates the biosynthesis of pneumocandins, lipohexapeptides of the echinocandin family that prevent fungal cell wall formation by non-competitive inhibition of beta-1,3-glucan synthase. The 10,12-dimethylmyristoyl side chain is synthesized by the reducing polyketide synthase gloL/GLPKS4. The thioesterase gloN/GLHYD exclusively interacts with gloL/GLPKS4 to maintain turnover of the polyketide side chain. The 10R,12S-dimethylmyristic acid is then transferred to the first thiolation domain of the nonribosomal peptide synthetase gloA/GLNRPS4 by the acyl-AMP ligase gloD/GLligase, followed by its acylation to L-ornithine to trigger elongation of the cyclic hexapeptide. L-ornithine, 4R-hydroxyl-L-proline (generated from L-proline by the dioxygenase gloF/GLOXY2), 3S-hydroxyl-L-homotyrosine (generated by gloG/GLHtyB, gloH/GLHtyA, gloI/GLHtyC, gloJ/GLHtyD and hydroxylated at C-3 by the dioxygenase gloM/GLOXY1), 3R-hydroxyl-L-glutamine (generated from L-glutamine probably by the dioxygenase gloE/GLOXY3) and 3S-hydroxyl-L-proline (generated from L-proline by the dioxygenase gloF/GLOXY2 to yield pneumocandin B0), or 3S-hydroxyl-4S-methyl-L-proline (generated from L-leucine by the dioxygenase gloC/GLOXY4 to yield pneumocandin A0) are sequentially added to the growing chain. The last C domain of gloA/GLNRPS4 is proposed to be responsible for cyclization by condensation to form the peptide bond between L-ornithine and 3S-hydroxyl-4S-methyl-L-proline (for pneumocandin A0) or 3S-hydroxyl-L-proline (for pneumocandin B0). Finally, the subsequent C-4 hydroxylation of 3S-hydroxyl-L-homotyrosine and L-ornithine dihydroxylation at C-4 and C-5 are performed by the cytochrome P450 monooxygenases gloP/GLP450-1 and gloO/GLP450-2, respectively. This chain is Probable thioesterase gloN, found in Glarea lozoyensis (strain ATCC 20868 / MF5171).